The primary structure comprises 340 residues: 4-amino-5-hydroxymethyl-2-methylpyrimidine phosphate synthase THI13 (340 aa).

At Lys62 the chain carries N6-(pyridoxal phosphate)lysine. The active site involves His66. 115-118 (GEFG) provides a ligand contact to pyridoxal 5'-phosphate. Residues 195-199 (CCCFC) carry the CCCFC; essential for catalytic activity, may be the site of iron coordination motif.

It belongs to the NMT1/THI5 family. In terms of assembly, homodimer. It depends on Fe cation as a cofactor.

It catalyses the reaction N(6)-(pyridoxal phosphate)-L-lysyl-[4-amino-5-hydroxymethyl-2-methylpyrimidine phosphate synthase] + L-histidyl-[4-amino-5-hydroxymethyl-2-methylpyrimidine phosphate synthase] + 2 Fe(3+) + 4 H2O = L-lysyl-[4-amino-5-hydroxymethyl-2-methylpyrimidine phosphate synthase] + (2S)-2-amino-5-hydroxy-4-oxopentanoyl-[4-amino-5-hydroxymethyl-2-methylpyrimidine phosphate synthase] + 4-amino-2-methyl-5-(phosphooxymethyl)pyrimidine + 3-oxopropanoate + 2 Fe(2+) + 2 H(+). The protein operates within cofactor biosynthesis; thiamine diphosphate biosynthesis. Functionally, responsible for the formation of the pyrimidine heterocycle in the thiamine biosynthesis pathway. Catalyzes the formation of hydroxymethylpyrimidine phosphate (HMP-P) from histidine and pyridoxal phosphate (PLP). The protein uses PLP and the active site histidine to form HMP-P, generating an inactive enzyme. The enzyme can only undergo a single turnover, which suggests it is a suicide enzyme. This chain is 4-amino-5-hydroxymethyl-2-methylpyrimidine phosphate synthase THI13, found in Saccharomyces cerevisiae (strain ATCC 204508 / S288c) (Baker's yeast).